Here is a 217-residue protein sequence, read N- to C-terminus: MKIFIDTANVEEIRKASELGVLSGVTTNPSLIAKEGRDLKEVVEEICSIVDGPISAEVISLEYEKMIEEGRELSKLHKNIVIKIPMCEEGLKAVSVLSKEGIKTNVTLIFSSMQALLAARAGATYVSPFLGRLDDIGNRGIEVVEQIADMFKIHEIKTEIIAASVRTPMHVLEAAMAGSHIATIPYKVIIQMSKHALTDIGIEKFMKDYEKAFGENK.

Lys83 (schiff-base intermediate with substrate) is an active-site residue.

This sequence belongs to the transaldolase family. Type 3B subfamily.

The protein resides in the cytoplasm. It carries out the reaction D-sedoheptulose 7-phosphate + D-glyceraldehyde 3-phosphate = D-erythrose 4-phosphate + beta-D-fructose 6-phosphate. It participates in carbohydrate degradation; pentose phosphate pathway; D-glyceraldehyde 3-phosphate and beta-D-fructose 6-phosphate from D-ribose 5-phosphate and D-xylulose 5-phosphate (non-oxidative stage): step 2/3. Functionally, transaldolase is important for the balance of metabolites in the pentose-phosphate pathway. This Clostridium botulinum (strain Okra / Type B1) protein is Probable transaldolase.